The chain runs to 657 residues: Translation factor GUF1, mitochondrial (657 aa).

The transit peptide at 1–39 (MRGCLQSVKWLTSALRPSQSLASSTRYPRRLLSTSAPRN) directs the protein to the mitochondrion. One can recognise a tr-type G domain in the interval 59–239 (ERFRNFCIVA…TVIEQIPAPV (181 aa)). GTP-binding positions include 68–75 (AHVDHGKS), 132–136 (DTPGH), and 186–189 (NKVD).

The protein belongs to the TRAFAC class translation factor GTPase superfamily. Classic translation factor GTPase family. LepA subfamily.

It is found in the mitochondrion inner membrane. The enzyme catalyses GTP + H2O = GDP + phosphate + H(+). In terms of biological role, promotes mitochondrial protein synthesis. May act as a fidelity factor of the translation reaction, by catalyzing a one-codon backward translocation of tRNAs on improperly translocated ribosomes. Binds to mitochondrial ribosomes in a GTP-dependent manner. This Ajellomyces capsulatus (strain G186AR / H82 / ATCC MYA-2454 / RMSCC 2432) (Darling's disease fungus) protein is Translation factor GUF1, mitochondrial.